The chain runs to 483 residues: Regulator of nonsense transcripts 3B (483 aa).

2 stretches are compositionally biased toward basic and acidic residues: residues 1–14 (MKEE…EKRV) and 34–50 (SKGE…KEAL). Positions 1 to 51 (MKEEKEHRPKEKRVTLLTPAGATGSGGGTSGDSSKGEDKQDRNKEKKEALS) are disordered. Residues 30-255 (SGDSSKGEDK…DIEKLKKIDR (226 aa)) form a necessary for interaction with UPF2 region. The tract at residues 52 to 57 (KVVIRR) is binds to UPF2. 2 positions are modified to phosphothreonine: Thr169 and Thr198. A disordered region spans residues 206-483 (NKQRMREEKR…ISHRKEGGEE (278 aa)). Basic and acidic residues-rich tracts occupy residues 209–268 (RMRE…EPKI), 285–314 (KKPE…DERA), 323–409 (KRSD…KAES), and 417–437 (EKTE…KDRP). Ser310 bears the Phosphoserine mark. Residues 424–483 (EVVKRDRIRNKDRPAMQLYQPGARSRNRLCPPDDSTKSGDSAAERKQESGISHRKEGGEE) are sufficient for association with EJC core. The interval 430 to 447 (RIRNKDRPAMQLYQPGAR) is necessary for interaction with RBM8A and for activating NMD. An Omega-N-methylarginine modification is found at Arg447. The segment covering 457-483 (DSTKSGDSAAERKQESGISHRKEGGEE) has biased composition (basic and acidic residues).

The protein belongs to the RENT3 family. As to quaternary structure, found in a post-splicing messenger ribonucleoprotein (mRNP) complex. Core component of the mRNA splicing-dependent exon junction complex (EJC); the core complex contains CASC3, EIF4A3, MAGOH or MAGOHB, and RBM8A. The EJC core components EIF4A3 and the MAGOH-RBM8A dimer form a composite binding site for UPF3B which overlaps with the EJC binding site for WIBG. Interacts with EST1A, UPF2 and RBM8A. Interacts with CPSF6. Interacts with DHX34; the interaction is RNA-independent. As to expression, expressed in testis, uterus, prostate, heart, muscle, brain, spinal cord and placenta.

The protein resides in the nucleus. The protein localises to the cytoplasm. Functionally, involved in nonsense-mediated decay (NMD) of mRNAs containing premature stop codons by associating with the nuclear exon junction complex (EJC) and serving as link between the EJC core and NMD machinery. Recruits UPF2 at the cytoplasmic side of the nuclear envelope and the subsequent formation of an UPF1-UPF2-UPF3 surveillance complex (including UPF1 bound to release factors at the stalled ribosome) is believed to activate NMD. In cooperation with UPF2 stimulates both ATPase and RNA helicase activities of UPF1. Binds spliced mRNA upstream of exon-exon junctions. In vitro, stimulates translation; the function is independent of association with UPF2 and components of the EJC core. This is Regulator of nonsense transcripts 3B from Homo sapiens (Human).